A 367-amino-acid polypeptide reads, in one-letter code: Homoserine O-acetyltransferase (367 aa).

One can recognise an AB hydrolase-1 domain in the interval 41 to 339 (NLIVLEHALT…PVGHDAFLTE (299 aa)). Catalysis depends on Ser-136, which acts as the Nucleophile. Arg-205 serves as a coordination point for substrate. Residues Asp-303 and His-333 contribute to the active site. Asp-334 serves as a coordination point for substrate.

Belongs to the AB hydrolase superfamily. MetX family. In terms of assembly, homodimer.

The protein localises to the cytoplasm. It catalyses the reaction L-homoserine + acetyl-CoA = O-acetyl-L-homoserine + CoA. It participates in amino-acid biosynthesis; L-methionine biosynthesis via de novo pathway; O-acetyl-L-homoserine from L-homoserine: step 1/1. Its function is as follows. Transfers an acetyl group from acetyl-CoA to L-homoserine, forming acetyl-L-homoserine. The protein is Homoserine O-acetyltransferase of Corynebacterium diphtheriae (strain ATCC 700971 / NCTC 13129 / Biotype gravis).